We begin with the raw amino-acid sequence, 404 residues long: tRNA N6-adenosine threonylcarbamoyltransferase, mitochondrial (404 aa).

The transit peptide at methionine 1 to valine 27 directs the protein to the mitochondrion. A divalent metal cation is bound by residues histidine 135 and histidine 139. Substrate is bound by residues leucine 157–glycine 161, aspartate 190, glycine 210, glutamate 214, serine 317–asparagine 318, and threonine 345. Aspartate 346 contacts a divalent metal cation.

It belongs to the KAE1 / TsaD family. In terms of assembly, monomer. Requires a divalent metal cation as cofactor.

The protein localises to the mitochondrion. The enzyme catalyses L-threonylcarbamoyladenylate + adenosine(37) in tRNA = N(6)-L-threonylcarbamoyladenosine(37) in tRNA + AMP + H(+). Its function is as follows. Required for the formation of a threonylcarbamoyl group on adenosine at position 37 (t(6)A37) in mitochondrial tRNAs that read codons beginning with adenine. Probably involved in the transfer of the threonylcarbamoyl moiety of threonylcarbamoyl-AMP (TC-AMP) to the N6 group of A37. Involved in mitochondrial genome maintenance. The sequence is that of tRNA N6-adenosine threonylcarbamoyltransferase, mitochondrial from Danio rerio (Zebrafish).